Reading from the N-terminus, the 578-residue chain is Rhoptry protein 4 (578 aa).

The first 33 residues, 1–33, serve as a signal peptide directing secretion; it reads MGHPTSFGQPSCLVWLAAAFLVLGLCLVQQGAG. A disordered region spans residues 56-82; that stretch reads VDKYSRDSTEGENTVSEGEAEGSRGGS. Residues 259–546 form the Protein kinase domain; that stretch reads LVRGRRIGLF…ALQAIETPEY (288 aa). The interval 559–578 is disordered; it reads LYSGDGTLTGGDDDMPPLET. Residues 569-578 are compositionally biased toward acidic residues; that stretch reads GDDDMPPLET.

Post-translationally, phosphorylated on multiple serine and threonine residues in parasitic extracts and infected cells but not in extracellular parasites.

The protein localises to the secreted. The protein resides in the parasitophorous vacuole membrane. In terms of biological role, thought to play a role in parasitophorous vacuole membrane function during the infection of host organisms. The chain is Rhoptry protein 4 from Toxoplasma gondii.